Here is a 160-residue protein sequence, read N- to C-terminus: MSLQKKPDLKDPVLRAKLAKGMGHNYYGEPAWPNDLLYTFPVCILGTIGCLVGLAVLEPTMFGEPANPFATPLEILPEWYFFPVFQILRVIPNKLLGVVLMAGVPAGLLTVPFIESINKFQNPFRRPVAMTVFLIGTVVAVWLGIGATLPIDTSLTLGFF.

The next 3 helical transmembrane spans lie at 36–56 (LLYT…GLAV), 95–115 (LLGV…PFIE), and 131–151 (TVFL…TLPI).

The protein belongs to the cytochrome b family. PetD subfamily. In terms of assembly, the 4 large subunits of the cytochrome b6-f complex are cytochrome b6, subunit IV (17 kDa polypeptide, petD), cytochrome f and the Rieske protein, while the 4 small subunits are petG, petL, petM and petN. The complex functions as a dimer.

It is found in the plastid. The protein localises to the chloroplast thylakoid membrane. Component of the cytochrome b6-f complex, which mediates electron transfer between photosystem II (PSII) and photosystem I (PSI), cyclic electron flow around PSI, and state transitions. The sequence is that of Cytochrome b6-f complex subunit 4 from Mesostigma viride (Green alga).